A 121-amino-acid polypeptide reads, in one-letter code: Cell division protein FtsB (121 aa).

Over methionine 1–tryptophan 6 the chain is Cytoplasmic. A helical transmembrane segment spans residues leucine 7–phenylalanine 24. Over glycine 25 to proline 121 the chain is Periplasmic. Residues glutamate 31–glycine 66 adopt a coiled-coil conformation. Residues glutamate 92–proline 121 form a disordered region. A compositionally biased stretch (pro residues) spans leucine 96–isoleucine 115.

Belongs to the FtsB family. As to quaternary structure, part of a complex composed of FtsB, FtsL and FtsQ.

It is found in the cell inner membrane. Its function is as follows. Essential cell division protein. May link together the upstream cell division proteins, which are predominantly cytoplasmic, with the downstream cell division proteins, which are predominantly periplasmic. The chain is Cell division protein FtsB from Xanthomonas euvesicatoria pv. vesicatoria (strain 85-10) (Xanthomonas campestris pv. vesicatoria).